Here is a 224-residue protein sequence, read N- to C-terminus: MKINLERLCRRLNYHFNNIAYLKQALTHCSAGSDNYERFEFLGDSILSFVIANELFNRFPLHSEGQLSRLRSFLVKGEMLAEIAREIDLGDYLFLGQGELRSGGFRRTSILADALEAILAAIYLDGGMIAAKQIILMLYSSRLDDPDLNHCLKDAKTQLQEFLQASKFALPEYVLTKIEGDEHAQIFHVTCTIEGVSQVAYGTGPNRRKAEQLAAKAMLEQLQG.

The RNase III domain maps to 5 to 127; sequence LERLCRRLNY…ILAAIYLDGG (123 aa). Position 40 (Glu-40) interacts with Mg(2+). Asp-44 is a catalytic residue. Mg(2+)-binding residues include Asp-113 and Glu-116. Glu-116 is a catalytic residue. The region spanning 154 to 224 is the DRBM domain; that stretch reads DAKTQLQEFL…AKAMLEQLQG (71 aa).

Belongs to the ribonuclease III family. Homodimer. The cofactor is Mg(2+).

The protein localises to the cytoplasm. The enzyme catalyses Endonucleolytic cleavage to 5'-phosphomonoester.. Digests double-stranded RNA. Involved in the processing of primary rRNA transcript to yield the immediate precursors to the large and small rRNAs (23S and 16S). Processes some mRNAs, and tRNAs when they are encoded in the rRNA operon. Processes pre-crRNA and tracrRNA of type II CRISPR loci if present in the organism. In Legionella pneumophila subsp. pneumophila (strain Philadelphia 1 / ATCC 33152 / DSM 7513), this protein is Ribonuclease 3.